We begin with the raw amino-acid sequence, 314 residues long: Ribosomal RNA small subunit methyltransferase H (314 aa).

S-adenosyl-L-methionine is bound by residues 40-42 (GGH), aspartate 60, phenylalanine 85, aspartate 107, and glutamine 114.

This sequence belongs to the methyltransferase superfamily. RsmH family.

The protein localises to the cytoplasm. The catalysed reaction is cytidine(1402) in 16S rRNA + S-adenosyl-L-methionine = N(4)-methylcytidine(1402) in 16S rRNA + S-adenosyl-L-homocysteine + H(+). Specifically methylates the N4 position of cytidine in position 1402 (C1402) of 16S rRNA. This is Ribosomal RNA small subunit methyltransferase H from Hydrogenovibrio crunogenus (strain DSM 25203 / XCL-2) (Thiomicrospira crunogena).